Here is a 133-residue protein sequence, read N- to C-terminus: Large ribosomal subunit protein bL17 (133 aa).

This sequence belongs to the bacterial ribosomal protein bL17 family. As to quaternary structure, part of the 50S ribosomal subunit. Contacts protein L32.

The protein is Large ribosomal subunit protein bL17 of Thermodesulfovibrio yellowstonii (strain ATCC 51303 / DSM 11347 / YP87).